Reading from the N-terminus, the 361-residue chain is tRNA-specific 2-thiouridylase MnmA (361 aa).

Residues 8–15 and M34 contribute to the ATP site; that span reads GMSGGVDS. The interval 94-96 is interaction with target base in tRNA; sequence NPD. C99 functions as the Nucleophile in the catalytic mechanism. C99 and C195 are joined by a disulfide. G123 contacts ATP. The segment at 145 to 147 is interaction with tRNA; the sequence is KDQ. C195 (cysteine persulfide intermediate) is an active-site residue. The tract at residues 307-308 is interaction with tRNA; that stretch reads RY.

The protein belongs to the MnmA/TRMU family.

Its subcellular location is the cytoplasm. The catalysed reaction is S-sulfanyl-L-cysteinyl-[protein] + uridine(34) in tRNA + AH2 + ATP = 2-thiouridine(34) in tRNA + L-cysteinyl-[protein] + A + AMP + diphosphate + H(+). In terms of biological role, catalyzes the 2-thiolation of uridine at the wobble position (U34) of tRNA, leading to the formation of s(2)U34. This is tRNA-specific 2-thiouridylase MnmA from Legionella pneumophila (strain Paris).